A 122-amino-acid chain; its full sequence is Large ribosomal subunit protein uL14c (122 aa).

Belongs to the universal ribosomal protein uL14 family. Part of the 50S ribosomal subunit.

Its subcellular location is the plastid. The protein localises to the chloroplast. Functionally, binds to 23S rRNA. The chain is Large ribosomal subunit protein uL14c from Gracilaria tenuistipitata var. liui (Red alga).